Consider the following 99-residue polypeptide: Large ribosomal subunit protein uL23 (99 aa).

It belongs to the universal ribosomal protein uL23 family. In terms of assembly, part of the 50S ribosomal subunit. Contacts protein L29, and trigger factor when it is bound to the ribosome.

One of the early assembly proteins it binds 23S rRNA. One of the proteins that surrounds the polypeptide exit tunnel on the outside of the ribosome. Forms the main docking site for trigger factor binding to the ribosome. The chain is Large ribosomal subunit protein uL23 from Azotobacter vinelandii (strain DJ / ATCC BAA-1303).